The following is a 145-amino-acid chain: Arginine repressor (145 aa).

Belongs to the ArgR family.

It localises to the cytoplasm. It participates in amino-acid biosynthesis; L-arginine biosynthesis [regulation]. Functionally, regulates arginine biosynthesis genes. This Solibacter usitatus (strain Ellin6076) protein is Arginine repressor.